The primary structure comprises 1138 residues: Condensin-2 complex subunit G2 (1138 aa).

A Phosphoserine modification is found at S30. An HEAT repeat occupies 459 to 497; that stretch reads LLPTLRYSLHDNSEKVRVAFVDLLLKIKAVRAAKFWKIC. T1114 is modified (phosphothreonine).

As to quaternary structure, component of the condensin-2 complex, which contains the SMC2 and SMC4 heterodimer, and 3 non SMC subunits that probably regulate the complex: NCAPH2, NCAPD3 and NCAPG2. As to expression, expressed in spleen, lung and testis as well as in hematopoietic cell lines.

It is found in the nucleus. In terms of biological role, regulatory subunit of the condensin-2 complex, a complex which establishes mitotic chromosome architecture and is involved in physical rigidity of the chromatid axis. Is required for early embryonic development and is essential for viability and expansion of the inner cell mass (ICM) of the implanting blastocyst. This chain is Condensin-2 complex subunit G2 (Ncapg2), found in Mus musculus (Mouse).